A 474-amino-acid chain; its full sequence is tRNA-2-methylthio-N(6)-dimethylallyladenosine synthase (474 aa).

An MTTase N-terminal domain is found at 3–120 (QKLHIKTWGC…LPEMINQIRG (118 aa)). [4Fe-4S] cluster-binding residues include C12, C49, C83, C157, C161, and C164. In terms of domain architecture, Radical SAM core spans 143-375 (RAEGPTAFVS…QQRINNQAAQ (233 aa)). One can recognise a TRAM domain in the interval 378–441 (RAMLGTEQRV…TNSLRGEVVR (64 aa)).

The protein belongs to the methylthiotransferase family. MiaB subfamily. As to quaternary structure, monomer. The cofactor is [4Fe-4S] cluster.

The protein resides in the cytoplasm. The catalysed reaction is N(6)-dimethylallyladenosine(37) in tRNA + (sulfur carrier)-SH + AH2 + 2 S-adenosyl-L-methionine = 2-methylsulfanyl-N(6)-dimethylallyladenosine(37) in tRNA + (sulfur carrier)-H + 5'-deoxyadenosine + L-methionine + A + S-adenosyl-L-homocysteine + 2 H(+). Catalyzes the methylthiolation of N6-(dimethylallyl)adenosine (i(6)A), leading to the formation of 2-methylthio-N6-(dimethylallyl)adenosine (ms(2)i(6)A) at position 37 in tRNAs that read codons beginning with uridine. The protein is tRNA-2-methylthio-N(6)-dimethylallyladenosine synthase of Histophilus somni (strain 129Pt) (Haemophilus somnus).